The following is a 101-amino-acid chain: Small ribosomal subunit protein bS18c (101 aa).

A compositionally biased stretch (basic residues) spans 1 to 19; that stretch reads MDKSKRPFRKSKRSFRRRL. Disordered stretches follow at residues 1–23 and 82–101; these read MDKS…PPIG and KQFE…TRNK.

The protein belongs to the bacterial ribosomal protein bS18 family. Part of the 30S ribosomal subunit.

It is found in the plastid. Its subcellular location is the chloroplast. The protein is Small ribosomal subunit protein bS18c of Drimys granadensis.